The primary structure comprises 157 residues: Protein-export protein SecB (157 aa).

This sequence belongs to the SecB family. In terms of assembly, homotetramer, a dimer of dimers. One homotetramer interacts with 1 SecA dimer.

It is found in the cytoplasm. One of the proteins required for the normal export of preproteins out of the cell cytoplasm. It is a molecular chaperone that binds to a subset of precursor proteins, maintaining them in a translocation-competent state. It also specifically binds to its receptor SecA. This Dichelobacter nodosus (strain VCS1703A) protein is Protein-export protein SecB.